The chain runs to 1390 residues: Hepatocyte growth factor receptor (1390 aa).

Positions 1–24 (MKAPAVLAPGILVLLFTLVQRSNG) are cleaved as a signal peptide. The Extracellular segment spans residues 25-932 (ECKEALAKSE…VIVQPDQNFT (908 aa)). The Sema domain occupies 27-515 (KEALAKSEMN…TGKKITKIPL (489 aa)). An N-linked (GlcNAc...) asparagine glycan is attached at N45. 4 disulfides stabilise this stretch: C95-C101, C98-C160, C133-C141, and C172-C175. N106 carries an N-linked (GlcNAc...) asparagine glycan. An N-linked (GlcNAc...) asparagine glycan is attached at N149. N202 carries an N-linked (GlcNAc...) asparagine glycan. Intrachain disulfides connect C298-C363 and C385-C397. N-linked (GlcNAc...) asparagine glycosylation is found at N399 and N405. 4 cysteine pairs are disulfide-bonded: C520–C538, C526–C561, C529–C545, and C541–C551. IPT/TIG domains lie at 563-655 (PAIY…FSYV), 657-739 (PVIT…FSYR), and 742-836 (PIVY…LIYV). Residue T582 is glycosylated (O-linked (Man) threonine). N-linked (GlcNAc...) asparagine glycosylation is found at N607 and N635. Residues T676 and T761 are each glycosylated (O-linked (Man) threonine). Residues N785, N879, and N930 are each glycosylated (N-linked (GlcNAc...) asparagine). A helical membrane pass occupies residues 933 to 955 (GLIAGVVSISIALLLLLGFFLWL). Topologically, residues 956-1390 (KKRKQIKDLG…TRPASFWETS (435 aa)) are cytoplasmic. S966 is subject to Phosphoserine. T977 is modified (phosphothreonine). S990, S997, and S1000 each carry phosphoserine. Phosphotyrosine is present on Y1003. The 268-residue stretch at 1078-1345 (VHFNEVIGRG…RISAIFSTFI (268 aa)) folds into the Protein kinase domain. Residues 1084–1092 (IGRGHFGCV) and K1110 contribute to the ATP site. D1204 acts as the Proton acceptor in catalysis. The interval 1212-1390 (LDEKFTVKVA…TRPASFWETS (179 aa)) is interaction with RANBP9. Y1230 bears the Phosphotyrosine mark. 2 positions are modified to phosphotyrosine; by autocatalysis: Y1234 and Y1235. T1289 is modified (phosphothreonine). The segment at 1320–1359 (WHPKAEMRPSFSELVSRISAIFSTFIGEHYVHVNATYVNV) is interaction with MUC20. 2 positions are modified to phosphotyrosine; by autocatalysis: Y1349 and Y1356. The residue at position 1365 (Y1365) is a Phosphotyrosine.

The protein belongs to the protein kinase superfamily. Tyr protein kinase family. In terms of assembly, heterodimer made of an alpha chain (50 kDa) and a beta chain (145 kDa) which are disulfide linked. Binds PLXNB1. Interacts when phosphorylated with downstream effectors including STAT3, PIK3R1, SRC, PCLG1, GRB2 and GAB1. Interacts with SPSB1, SPSB2 and SPSB4. Interacts with INPP5D/SHIP1. When phosphorylated at Tyr-1356, interacts with INPPL1/SHIP2. Interacts with RANBP9 and RANBP10, as well as SPSB1, SPSB2, SPSB3 and SPSB4. SPSB1 binding occurs in the presence and in the absence of HGF, however HGF treatment has a positive effect on this interaction. Interacts with MUC20; prevents interaction with GRB2 and suppresses hepatocyte growth factor-induced cell proliferation. Interacts with GRB10. Interacts with PTPN1 and PTPN2. Interacts with HSP90AA1 and HSP90AB1; the interaction suppresses MET kinase activity. Interacts with tensin TNS3. Interacts (when phosphorylated) with tensin TNS4 (via SH2 domain); the interaction increases MET protein stability by inhibiting MET endocytosis and subsequent lysosomal degradation. Autophosphorylated in response to ligand binding on Tyr-1234 and Tyr-1235 in the kinase domain leading to further phosphorylation of Tyr-1349 and Tyr-1356 in the C-terminal multifunctional docking site. Dephosphorylated by PTPRJ at Tyr-1349 and Tyr-1365. Dephosphorylated by PTPN1 and PTPN2. Post-translationally, ubiquitinated. Ubiquitination by CBL regulates the receptor stability and activity through proteasomal degradation. In terms of processing, O-mannosylation of IPT/TIG domains by TMEM260 is required for protein maturation. O-mannosylated residues are composed of single mannose glycans that are not elongated or modified.

Its subcellular location is the membrane. The catalysed reaction is L-tyrosyl-[protein] + ATP = O-phospho-L-tyrosyl-[protein] + ADP + H(+). In its inactive state, the C-terminal tail interacts with the catalytic domain and inhibits the kinase activity. Upon ligand binding, the C-terminal tail is displaced and becomes phosphorylated, thus increasing the kinase activity. Receptor tyrosine kinase that transduces signals from the extracellular matrix into the cytoplasm by binding to hepatocyte growth factor/HGF ligand. Regulates many physiological processes including proliferation, scattering, morphogenesis and survival. Ligand binding at the cell surface induces autophosphorylation of MET on its intracellular domain that provides docking sites for downstream signaling molecules. Following activation by ligand, interacts with the PI3-kinase subunit PIK3R1, PLCG1, SRC, GRB2, STAT3 or the adapter GAB1. Recruitment of these downstream effectors by MET leads to the activation of several signaling cascades including the RAS-ERK, PI3 kinase-AKT, or PLCgamma-PKC. The RAS-ERK activation is associated with the morphogenetic effects while PI3K/AKT coordinates prosurvival effects. During embryonic development, MET signaling plays a role in gastrulation, development and migration of muscles and neuronal precursors, angiogenesis and kidney formation. In adults, participates in wound healing as well as organ regeneration and tissue remodeling. Also promotes differentiation and proliferation of hematopoietic cells. This is Hepatocyte growth factor receptor (MET) from Pongo abelii (Sumatran orangutan).